Reading from the N-terminus, the 130-residue chain is Serum amyloid A-4 protein (130 aa).

An N-terminal signal peptide occupies residues 1–18 (MRLATVIVLCSLFLGVSG). The disordered stretch occupies residues 109–130 (EEWGRSGKNPNHFRPEGLPEKF). Over residues 121 to 130 (FRPEGLPEKF) the composition is skewed to basic and acidic residues.

Belongs to the SAA family. Apolipoprotein of the HDL complex. In terms of tissue distribution, expressed by the liver; secreted in plasma.

It is found in the secreted. Functionally, major acute phase reactant. This is Serum amyloid A-4 protein from Mus musculus (Mouse).